The primary structure comprises 166 residues: Disulfide bond formation protein B (166 aa).

The Cytoplasmic segment spans residues 1 to 11 (MIALPRNRRPL). A helical membrane pass occupies residues 12–28 (FLAVFAYCAALLAFGLY). The Periplasmic segment spans residues 29-46 (LQHYQGIEPCPMCIMQRY). Cys38 and Cys41 form a disulfide bridge. The chain crosses the membrane as a helical span at residues 47–63 (AFALVGVIALVAGLHGP). Topologically, residues 64–70 (RGAGVRV) are cytoplasmic. A helical transmembrane segment spans residues 71–87 (YGGLLLLTALAGGSVAA). Residues 88–143 (RQTWMQLYPPEIPECGPGLEYMLESFPLTSALPMIFRGAGDCSAIDWTFLGLSLAN) lie on the Periplasmic side of the membrane. Cys102 and Cys129 are joined by a disulfide. The chain crosses the membrane as a helical span at residues 144–162 (WSLLNFGAAALLALWLLFG). Topologically, residues 163–166 (RRVR) are cytoplasmic.

This sequence belongs to the DsbB family.

The protein resides in the cell inner membrane. In terms of biological role, required for disulfide bond formation in some periplasmic proteins. Acts by oxidizing the DsbA protein. This Azoarcus sp. (strain BH72) protein is Disulfide bond formation protein B.